The primary structure comprises 472 residues: Sporozoite surface protein P36p (472 aa).

The first 23 residues, 1 to 23 (MMKRRRIFMYYCFCFLLKYVAFS), serve as a signal peptide directing secretion. Residues N24, N29, N93, N112, and N185 are each glycosylated (N-linked (GlcNAc...) asparagine). 2 consecutive 6-Cys domains span residues 24–157 (NVTN…FKKM) and 160–299 (KIKG…TSKN). Disulfide bonds link C64-C138, C81-C136, C164-C188, C202-C281, and C222-C279. Residues N295, N306, N383, N396, N400, and N416 are each glycosylated (N-linked (GlcNAc...) asparagine). Residues 359-385 (KMDPSDEDESNENAHNGNRANKDANYS) are disordered. S449 carries GPI-anchor amidated serine lipidation. A propeptide spans 450–472 (SSYYEVFNYFSIAFILIIHMLLW) (removed in mature form).

The protein localises to the cell surface. It localises to the cell membrane. Involved in sporozoite infection of hepatocytes and replication therein. The polypeptide is Sporozoite surface protein P36p (P52) (Plasmodium berghei (strain Anka)).